Here is a 116-residue protein sequence, read N- to C-terminus: Large ribosomal subunit protein bL17 (116 aa).

The protein belongs to the bacterial ribosomal protein bL17 family. In terms of assembly, part of the 50S ribosomal subunit. Contacts protein L32.

This is Large ribosomal subunit protein bL17 from Synechococcus sp. (strain JA-2-3B'a(2-13)) (Cyanobacteria bacterium Yellowstone B-Prime).